A 160-amino-acid chain; its full sequence is Protein MGF 110-13L (160 aa).

The next 2 helical transmembrane spans lie at 13 to 33 and 35 to 55; these read HCCF…FAYY and NLHL…IWLS.

The protein belongs to the asfivirus MGF 110 family.

The protein resides in the host membrane. In terms of biological role, plays a role in virus cell tropism, and may be required for efficient virus replication in macrophages. This Ornithodoros (relapsing fever ticks) protein is Protein MGF 110-13L.